Here is a 713-residue protein sequence, read N- to C-terminus: P-loop NTPase domain-containing protein LPA1 homolog (713 aa).

Disordered regions lie at residues 218–249 (AKKR…PIGK), 504–575 (TSQA…EDLS), and 650–713 (LDSP…APDK). A compositionally biased stretch (basic and acidic residues) spans 231–246 (DFDKTRPLNDKPDGKP). Positions 504 to 531 (TSQAGSVNESWDNANEGTGSHVPSSSGS) are enriched in polar residues. The segment covering 533-544 (KKLDGHCKEIKE) has biased composition (basic and acidic residues). Over residues 551 to 562 (SDDDEEEEEEAA) the composition is skewed to acidic residues. The segment covering 656 to 668 (ARSSSALPISASS) has biased composition (low complexity).

Functionally, required for the accumulation of phytic acid in seeds. Phytic acid is the primary storage form of phosphorus in cereal grains and other plant seeds. The polypeptide is P-loop NTPase domain-containing protein LPA1 homolog (Oryza sativa subsp. japonica (Rice)).